The chain runs to 100 residues: Urease subunit gamma (100 aa).

Belongs to the urease gamma subunit family. As to quaternary structure, heterotrimer of UreA (gamma), UreB (beta) and UreC (alpha) subunits. Three heterotrimers associate to form the active enzyme.

The protein resides in the cytoplasm. The catalysed reaction is urea + 2 H2O + H(+) = hydrogencarbonate + 2 NH4(+). The protein operates within nitrogen metabolism; urea degradation; CO(2) and NH(3) from urea (urease route): step 1/1. This Actinobacillus pleuropneumoniae (Haemophilus pleuropneumoniae) protein is Urease subunit gamma.